Consider the following 544-residue polypeptide: MTRFVFITGGVVSSLGKGIASAALGALLQARGYSVRLRKLDPYLNVDPGTMSPYQHGEVFVTDDGAETDLDLGHYERFTGVHARKSDNATTGRIYSDVIARERRGDYLGATVQVIPHITDAIKDAVTRDLNQDLDFALIEIGGTVGDIESLPFLEAIRQLGNELGPSRTMFVHLTLVPYIPSAGELKTKPTQHSVKELQNVGIQPNMLLCRCDRLIPENERRKIANFCNVRQEAVVSALDVDTIYSVPIRYHEEGMDREVLRHFNLPIGGEPDLTRWREIADVVRAPDGVVKIAIVGKYITLLDSYKSLAEALVHGGIANRVKVEIDWVDSQIFEQADSVQRLEGVHGILVPGGFGERGAEGKIEAVRFAREHKVPFLGICFGMQMAVIEAARNLAGLPDASSTEFGPCEVPIVGLMTEWARGNDLERRSASGDLGGTMRLGSYPAALIEGSLARETYGGVPVVQERHRHRYEVNIHYREQLEAVGLRFSGLSPDGVLPEIVEYADHPWFVGVQYHPELKSKPFDPHPLFSGFVAAAVRQARLV.

An amidoligase domain region spans residues 1-266 (MTRFVFITGG…DREVLRHFNL (266 aa)). Ser13 contributes to the CTP binding site. Position 13 (Ser13) interacts with UTP. Residue 14–19 (SLGKGI) coordinates ATP. Tyr54 is an L-glutamine binding site. Asp71 contributes to the ATP binding site. Residues Asp71 and Glu140 each contribute to the Mg(2+) site. Residues 147–149 (DIE), 187–192 (KTKPTQ), and Lys223 contribute to the CTP site. Residues 187-192 (KTKPTQ) and Lys223 contribute to the UTP site. The region spanning 292–543 (KIAIVGKYIT…VAAAVRQARL (252 aa)) is the Glutamine amidotransferase type-1 domain. Residue Gly354 participates in L-glutamine binding. Cys381 (nucleophile; for glutamine hydrolysis) is an active-site residue. L-glutamine contacts are provided by residues 382–385 (FGMQ), Glu405, and Arg471. Active-site residues include His516 and Glu518.

It belongs to the CTP synthase family. Homotetramer.

It carries out the reaction UTP + L-glutamine + ATP + H2O = CTP + L-glutamate + ADP + phosphate + 2 H(+). It catalyses the reaction L-glutamine + H2O = L-glutamate + NH4(+). The enzyme catalyses UTP + NH4(+) + ATP = CTP + ADP + phosphate + 2 H(+). Its pathway is pyrimidine metabolism; CTP biosynthesis via de novo pathway; CTP from UDP: step 2/2. Its activity is regulated as follows. Allosterically activated by GTP, when glutamine is the substrate; GTP has no effect on the reaction when ammonia is the substrate. The allosteric effector GTP functions by stabilizing the protein conformation that binds the tetrahedral intermediate(s) formed during glutamine hydrolysis. Inhibited by the product CTP, via allosteric rather than competitive inhibition. In terms of biological role, catalyzes the ATP-dependent amination of UTP to CTP with either L-glutamine or ammonia as the source of nitrogen. Regulates intracellular CTP levels through interactions with the four ribonucleotide triphosphates. The sequence is that of CTP synthase from Granulibacter bethesdensis (strain ATCC BAA-1260 / CGDNIH1).